The primary structure comprises 232 residues: 7-cyano-7-deazaguanine synthase (232 aa).

8 to 18 provides a ligand contact to ATP; sequence FSGGQDSTTCL. The Zn(2+) site is built by C187, C196, C199, and C202.

Belongs to the QueC family. It depends on Zn(2+) as a cofactor.

It carries out the reaction 7-carboxy-7-deazaguanine + NH4(+) + ATP = 7-cyano-7-deazaguanine + ADP + phosphate + H2O + H(+). It functions in the pathway purine metabolism; 7-cyano-7-deazaguanine biosynthesis. In terms of biological role, catalyzes the ATP-dependent conversion of 7-carboxy-7-deazaguanine (CDG) to 7-cyano-7-deazaguanine (preQ(0)). This chain is 7-cyano-7-deazaguanine synthase, found in Photobacterium profundum (strain SS9).